Consider the following 198-residue polypeptide: MPFDLKAFKSDIVFYIDNYERLEDLLNEIDNKMEKIKHFFNGREKVLLKLENLEEKISDIPKIMAKIKEYRIKIKAIITDEYDEKAPTVRKEKDEEKTVIYLKNLRSGQKISHNGNIILVGNVNAGSEINAGGTVVIFGSCNGIVRAGLKNPHSYILTLSINTPLLQISDVKHQLNKQYNNPVFVYQKGGKLMFKEII.

Belongs to the MinC family. In terms of assembly, interacts with MinD and FtsZ.

Cell division inhibitor that blocks the formation of polar Z ring septums. Rapidly oscillates between the poles of the cell to destabilize FtsZ filaments that have formed before they mature into polar Z rings. Prevents FtsZ polymerization. The sequence is that of Probable septum site-determining protein MinC from Thermosipho melanesiensis (strain DSM 12029 / CIP 104789 / BI429).